A 74-amino-acid chain; its full sequence is NAD(P)H-quinone oxidoreductase subunit O (74 aa).

Belongs to the complex I NdhO subunit family. NDH-1 can be composed of about 15 different subunits; different subcomplexes with different compositions have been identified which probably have different functions.

It is found in the cellular thylakoid membrane. It carries out the reaction a plastoquinone + NADH + (n+1) H(+)(in) = a plastoquinol + NAD(+) + n H(+)(out). The enzyme catalyses a plastoquinone + NADPH + (n+1) H(+)(in) = a plastoquinol + NADP(+) + n H(+)(out). In terms of biological role, NDH-1 shuttles electrons from an unknown electron donor, via FMN and iron-sulfur (Fe-S) centers, to quinones in the respiratory and/or the photosynthetic chain. The immediate electron acceptor for the enzyme in this species is believed to be plastoquinone. Couples the redox reaction to proton translocation, and thus conserves the redox energy in a proton gradient. Cyanobacterial NDH-1 also plays a role in inorganic carbon-concentration. This is NAD(P)H-quinone oxidoreductase subunit O from Synechococcus sp. (strain RCC307).